The primary structure comprises 466 residues: Putative proline/betaine transporter (466 aa).

The next 12 helical transmembrane spans lie at 20-42 (VVATGIGNAMEWFDFGVYAYTTA), 63-83 (FAALAIAFLLRPIGGVVFGII), 91-111 (VVLTSTIILMAFSTLTIGLLP), 116-136 (IGLWAPILLLLARVLQGFSTG), 164-184 (IGTLSGYIAASIMIAVLTFFL), 191-211 (SFGWRIPFLLGLFLGLFGLYL), 239-259 (IIRFYYIDIFVCFVAVVFFNV), 285-305 (VLITCVMAIMIPLALMFGKLA), 313-332 (VFLIGTGGLTLFSIIAFMLL), 337-354 (FVVIVIGIFILGFFLSTY), 377-397 (VTFNISVSIFGGTTPLVATWL), and 405-425 (LAPAYYLTAISVIGFLVITFL).

The protein belongs to the major facilitator superfamily. Metabolite:H+ Symporter (MHS) family (TC 2.A.1.6) family.

Its subcellular location is the cell membrane. Functionally, may be a proton symporter involved in the uptake of osmolytes such as proline and glycine betaine. This is Putative proline/betaine transporter (proP) from Staphylococcus aureus (strain MSSA476).